Reading from the N-terminus, the 182-residue chain is Isopentenyl-diphosphate Delta-isomerase (182 aa).

Residues histidine 23 and histidine 30 each contribute to the Mn(2+) site. A Nudix hydrolase domain is found at 28–162 (PRHLAFSCHV…PWAFSPWLVE (135 aa)). Residue cysteine 65 is part of the active site. Cysteine 65 provides a ligand contact to Mg(2+). Histidine 67 contributes to the Mn(2+) binding site. Mg(2+) is bound at residue glutamate 85. Glutamate 112 and glutamate 114 together coordinate Mn(2+). Residue glutamate 114 is part of the active site.

This sequence belongs to the IPP isomerase type 1 family. Mg(2+) serves as cofactor. Mn(2+) is required as a cofactor.

The protein resides in the cytoplasm. The catalysed reaction is isopentenyl diphosphate = dimethylallyl diphosphate. It functions in the pathway isoprenoid biosynthesis; dimethylallyl diphosphate biosynthesis; dimethylallyl diphosphate from isopentenyl diphosphate: step 1/1. In terms of biological role, catalyzes the 1,3-allylic rearrangement of the homoallylic substrate isopentenyl (IPP) to its highly electrophilic allylic isomer, dimethylallyl diphosphate (DMAPP). This chain is Isopentenyl-diphosphate Delta-isomerase, found in Brevibacterium linens.